The sequence spans 332 residues: Glycerol-3-phosphate dehydrogenase [NAD(P)+] (332 aa).

Residues serine 10, tryptophan 11, lysine 31, and lysine 105 each contribute to the NADPH site. 3 residues coordinate sn-glycerol 3-phosphate: lysine 105, glycine 136, and serine 138. Alanine 140 contributes to the NADPH binding site. 5 residues coordinate sn-glycerol 3-phosphate: lysine 191, aspartate 244, serine 254, arginine 255, and asparagine 256. The active-site Proton acceptor is the lysine 191. NADPH is bound at residue arginine 255. Residues valine 279 and glutamate 281 each contribute to the NADPH site.

The protein belongs to the NAD-dependent glycerol-3-phosphate dehydrogenase family.

The protein resides in the cytoplasm. It catalyses the reaction sn-glycerol 3-phosphate + NAD(+) = dihydroxyacetone phosphate + NADH + H(+). It carries out the reaction sn-glycerol 3-phosphate + NADP(+) = dihydroxyacetone phosphate + NADPH + H(+). It functions in the pathway membrane lipid metabolism; glycerophospholipid metabolism. In terms of biological role, catalyzes the reduction of the glycolytic intermediate dihydroxyacetone phosphate (DHAP) to sn-glycerol 3-phosphate (G3P), the key precursor for phospholipid synthesis. This chain is Glycerol-3-phosphate dehydrogenase [NAD(P)+], found in Anaeromyxobacter dehalogenans (strain 2CP-C).